Consider the following 183-residue polypeptide: ATP synthase subunit delta (183 aa).

Belongs to the ATPase delta chain family. F-type ATPases have 2 components, F(1) - the catalytic core - and F(0) - the membrane proton channel. F(1) has five subunits: alpha(3), beta(3), gamma(1), delta(1), epsilon(1). F(0) has three main subunits: a(1), b(2) and c(10-14). The alpha and beta chains form an alternating ring which encloses part of the gamma chain. F(1) is attached to F(0) by a central stalk formed by the gamma and epsilon chains, while a peripheral stalk is formed by the delta and b chains.

Its subcellular location is the cell inner membrane. F(1)F(0) ATP synthase produces ATP from ADP in the presence of a proton or sodium gradient. F-type ATPases consist of two structural domains, F(1) containing the extramembraneous catalytic core and F(0) containing the membrane proton channel, linked together by a central stalk and a peripheral stalk. During catalysis, ATP synthesis in the catalytic domain of F(1) is coupled via a rotary mechanism of the central stalk subunits to proton translocation. Its function is as follows. This protein is part of the stalk that links CF(0) to CF(1). It either transmits conformational changes from CF(0) to CF(1) or is implicated in proton conduction. The sequence is that of ATP synthase subunit delta from Syntrophobacter fumaroxidans (strain DSM 10017 / MPOB).